Here is a 387-residue protein sequence, read N- to C-terminus: GDSL esterase/lipase At2g23540 (387 aa).

Positions 1-32 (MATRASTSSRVSPAFTFLVIFFLLSLTASVEA) are cleaved as a signal peptide. The active-site Nucleophile is Ser55. N-linked (GlcNAc...) asparagine glycosylation is found at Asn139 and Asn159. Catalysis depends on residues Asp352 and His355. The N-linked (GlcNAc...) asparagine glycan is linked to Asn380.

This sequence belongs to the 'GDSL' lipolytic enzyme family.

Its subcellular location is the secreted. This is GDSL esterase/lipase At2g23540 from Arabidopsis thaliana (Mouse-ear cress).